The following is a 223-amino-acid chain: Glutathione S-transferase alpha I (223 aa).

Met1 carries the post-translational modification N-acetylmethionine. At Ala2 the chain carries N-acetylalanine; in Glutathione S-transferase alpha I, N-terminally processed. The GST N-terminal domain occupies 3-83 (RKPLLHYFNG…YVANKHNLYG (81 aa)). The residue at position 4 (Lys4) is an N6-succinyllysine. Glutathione contacts are provided by residues Tyr9, Arg45, 54 to 55 (QV), and 67 to 68 (QT). The 124-residue stretch at 85–208 (DMKERALIDM…QPGSQRKPPM (124 aa)) folds into the GST C-terminal domain.

It belongs to the GST superfamily. Alpha family. As to quaternary structure, homodimer or heterodimer of GSTA1 and GSTA2. Liver and lung.

The protein localises to the cytoplasm. It carries out the reaction RX + glutathione = an S-substituted glutathione + a halide anion + H(+). The enzyme catalyses prostaglandin A2 + glutathione = prostaglandin A2-S-(R)-glutathione. The catalysed reaction is prostaglandin J2 + glutathione = prostaglandin J2-S-(R)-glutathione. It catalyses the reaction (13S)-hydroperoxy-(9Z,11E)-octadecadienoate + 2 glutathione = (13S)-hydroxy-(9Z,11E)-octadecadienoate + glutathione disulfide + H2O. It carries out the reaction androst-5-ene-3,17-dione = androst-4-ene-3,17-dione. Glutathione S-transferase that catalyzes the nucleophilic attack of the sulfur atom of glutathione on the electrophilic groups of a wide range of exogenous and endogenous compounds. Involved in the formation of glutathione conjugates of both prostaglandin A2 (PGA2) and prostaglandin J2 (PGJ2). It also catalyzes the isomerization of D5-androstene-3,17-dione (AD) into D4-androstene-3,17-dione and may therefore play an important role in hormone biosynthesis. Through its glutathione-dependent peroxidase activity toward the fatty acid hydroperoxide (13S)-hydroperoxy-(9Z,11E)-octadecadienoate/13-HPODE it is also involved in the metabolism of oxidized linoleic acid. This Oryctolagus cuniculus (Rabbit) protein is Glutathione S-transferase alpha I.